The sequence spans 47 residues: Delta-actitoxin-Aspp1a (47 aa).

Disulfide bonds link Cys-4-Cys-44, Cys-6-Cys-34, and Cys-27-Cys-45.

Belongs to the sea anemone sodium channel inhibitory toxin family. Type I subfamily.

Its subcellular location is the secreted. The protein resides in the nematocyst. Binds specifically to voltage-gated sodium channels (Nav) (site 3), thereby delaying their inactivation during signal transduction. Has a heart stimulation effect on isolated rat atria that is higher than that of Hk7a, Hk8a and Hk16a. The protein is Delta-actitoxin-Aspp1a of Anthopleura sp. (strain 'Zhanjiang') (Sea anemone).